The sequence spans 325 residues: Neisseria adhesin A (325 aa).

A signal peptide spans 1–23 (MKHFQSKVLTAAILAALSGSAMA). Positions 24–137 (DNPPPSTDEI…NTAAIGENKA (114 aa)) are head domain. A coiled-coil region spans residues 86-135 (LKEVLAQHDQSLADLTGTVDENSEALVKTAEVVNDISADVKANTAAIGEN). Residues 139–231 (IAKKADQTAL…LASAEKSITE (93 aa)) form a coiled stalk domain region. Residues 232-270 (HGTRLNGLDRTVSDLRKETRQGLAEQAALSGLFQPYNVG) form an outer membrane translocation of the passenger domain region. The next 4 membrane-spanning stretches (beta stranded) occupy residues 270 to 280 (GRFNVTAAVGG), 284 to 295 (ESAVAIGTGFRF), 302 to 308 (KAGVAVG), and 314 to 325 (SAAYHVGVNYEW). The interval 271-325 (RFNVTAAVGGYKSESAVAIGTGFRFTENFAAKAGVAVGTSSGSSAAYHVGVNYEW) is translocator domain.

The protein belongs to the autotransporter-2 (AT-2) (TC 1.B.40) family. In terms of assembly, homotrimer.

The protein resides in the cell surface. It is found in the cell outer membrane. An antigenic bacterial cell surface protein that adheres to and induces bacterial uptake by human epithelial cells. This chain is Neisseria adhesin A, found in Neisseria meningitidis serogroup B.